The chain runs to 276 residues: MARQYAVWGNPIAHSKSPYIHQLFAQQSNRRIEYAAKLGDKIAFEKQLVQFFTDGANGVNITSPFKARAFRLADVCSESCLLAGAANTLKRLDDGRLFADNTDGKGFCADLARLEWLIPEQRVLILGAGGVTKGVLLPLLLAKQKVTLSNRTHIKAVELAQQFAKYGDIQAVSLSEIVQHPPFDLIINATSLGLQGGYIALPNHLFEKSAVYDMEYASNMCTPFLNYVRTQGVTRYQDGLGMLVNQAAFSFQLWEGELPKVENVLKQLRAEMGYVK.

Shikimate is bound by residues 15-17 (SKS) and threonine 62. Lysine 66 acts as the Proton acceptor in catalysis. NADP(+) is bound at residue glutamate 78. Asparagine 87 and aspartate 103 together coordinate shikimate. Residues 127–131 (GAGGV), 150–155 (NRTHIK), and methionine 214 each bind NADP(+). Tyrosine 216 lines the shikimate pocket. Glycine 239 contacts NADP(+).

This sequence belongs to the shikimate dehydrogenase family. In terms of assembly, homodimer.

It catalyses the reaction shikimate + NADP(+) = 3-dehydroshikimate + NADPH + H(+). It functions in the pathway metabolic intermediate biosynthesis; chorismate biosynthesis; chorismate from D-erythrose 4-phosphate and phosphoenolpyruvate: step 4/7. Its function is as follows. Involved in the biosynthesis of the chorismate, which leads to the biosynthesis of aromatic amino acids. Catalyzes the reversible NADPH linked reduction of 3-dehydroshikimate (DHSA) to yield shikimate (SA). The protein is Shikimate dehydrogenase (NADP(+)) of Haemophilus ducreyi (strain 35000HP / ATCC 700724).